We begin with the raw amino-acid sequence, 359 residues long: Histidinol-phosphate aminotransferase (359 aa).

At lysine 217 the chain carries N6-(pyridoxal phosphate)lysine.

This sequence belongs to the class-II pyridoxal-phosphate-dependent aminotransferase family. Histidinol-phosphate aminotransferase subfamily. In terms of assembly, homodimer. The cofactor is pyridoxal 5'-phosphate.

The enzyme catalyses L-histidinol phosphate + 2-oxoglutarate = 3-(imidazol-4-yl)-2-oxopropyl phosphate + L-glutamate. It functions in the pathway amino-acid biosynthesis; L-histidine biosynthesis; L-histidine from 5-phospho-alpha-D-ribose 1-diphosphate: step 7/9. The polypeptide is Histidinol-phosphate aminotransferase (Citrobacter koseri (strain ATCC BAA-895 / CDC 4225-83 / SGSC4696)).